Consider the following 97-residue polypeptide: RNA-binding protein Hfq (97 aa).

The Sm domain occupies 10–70 (DPFLNALRKE…ISTIVPARSV (61 aa)). Residues 75 to 97 (ENRPQAAPASTLVQVETVQQPAE) form a disordered region. Residues 85–97 (TLVQVETVQQPAE) are compositionally biased toward polar residues.

It belongs to the Hfq family. Homohexamer.

RNA chaperone that binds small regulatory RNA (sRNAs) and mRNAs to facilitate mRNA translational regulation in response to envelope stress, environmental stress and changes in metabolite concentrations. Also binds with high specificity to tRNAs. The sequence is that of RNA-binding protein Hfq from Neisseria meningitidis serogroup C / serotype 2a (strain ATCC 700532 / DSM 15464 / FAM18).